A 105-amino-acid chain; its full sequence is Late embryogenesis abundant protein Lea5-D (105 aa).

The tract at residues 48–67 is disordered; sequence KVERRDAMKESSSSETRAYS. Residues 57 to 67 are compositionally biased toward low complexity; it reads ESSSSETRAYS.

This sequence belongs to the LEA type 3 family.

The chain is Late embryogenesis abundant protein Lea5-D (LEA5-D) from Gossypium hirsutum (Upland cotton).